The sequence spans 531 residues: Protein MGF 505-1R (531 aa).

It belongs to the asfivirus MGF 505 family.

Its function is as follows. Plays a role in virus cell tropism, and may be required for efficient virus replication in macrophages. The sequence is that of Protein MGF 505-1R from Ornithodoros (relapsing fever ticks).